Consider the following 66-residue polypeptide: Large ribosomal subunit protein bL31 (66 aa).

4 residues coordinate Zn(2+): cysteine 16, cysteine 18, cysteine 36, and cysteine 39.

The protein belongs to the bacterial ribosomal protein bL31 family. Type A subfamily. Part of the 50S ribosomal subunit. Requires Zn(2+) as cofactor.

Functionally, binds the 23S rRNA. The chain is Large ribosomal subunit protein bL31 from Pelobacter propionicus (strain DSM 2379 / NBRC 103807 / OttBd1).